The sequence spans 243 residues: tRNA (guanine-N(1)-)-methyltransferase (243 aa).

Residues Gly-123 and 143–148 (LGDFVM) each bind S-adenosyl-L-methionine.

This sequence belongs to the RNA methyltransferase TrmD family. Homodimer.

It is found in the cytoplasm. It catalyses the reaction guanosine(37) in tRNA + S-adenosyl-L-methionine = N(1)-methylguanosine(37) in tRNA + S-adenosyl-L-homocysteine + H(+). Specifically methylates guanosine-37 in various tRNAs. In Ruegeria pomeroyi (strain ATCC 700808 / DSM 15171 / DSS-3) (Silicibacter pomeroyi), this protein is tRNA (guanine-N(1)-)-methyltransferase.